Reading from the N-terminus, the 253-residue chain is Transmembrane protein 69 (253 aa).

The next 5 membrane-spanning stretches (helical) occupy residues 104-124 (ALYL…LMNV), 137-157 (VAYG…FAIP), 165-185 (DWMN…ALLF), 192-212 (AAVL…ALLP), and 223-243 (AILT…SSVY).

It localises to the membrane. The polypeptide is Transmembrane protein 69 (tmem69) (Xenopus tropicalis (Western clawed frog)).